The following is a 261-amino-acid chain: HLA class II histocompatibility antigen, DQ beta 1 chain (261 aa).

Residues 1–32 (MSWKKALRIPGGLRAATVTLMLAMLSTPVAEG) form the signal peptide. Residues 33–126 (RDSPEDFVYQ…LELRTTLQRR (94 aa)) are beta-1. At 33–230 (RDSPEDFVYQ…RAQSESAQSK (198 aa)) the chain is on the extracellular side. 2 disulfide bridges follow: Cys47-Cys111 and Cys149-Cys205. Asn51 carries an N-linked (GlcNAc...) asparagine glycan. The segment at 127–220 (VEPTVTISPS…SLQNPITVEW (94 aa)) is beta-2. The 89-residue stretch at 129 to 217 (PTVTISPSRT…EHPSLQNPIT (89 aa)) folds into the Ig-like C1-type domain. The segment at 221–230 (RAQSESAQSK) is connecting peptide. A helical transmembrane segment spans residues 231 to 251 (MLSGIGGFVLGLIFLGLGLII). Residues 252–261 (HHRSQKGLLH) are Cytoplasmic-facing.

This sequence belongs to the MHC class II family. Heterodimer of an alpha and a beta subunit; also referred as MHC class II molecule. In the endoplasmic reticulum (ER) it forms a heterononamer; 3 MHC class II molecules bind to a CD74 homotrimer (also known as invariant chain or HLA class II histocompatibility antigen gamma chain). In the endosomal/lysosomal system; CD74 undergoes sequential degradation by various proteases; leaving a small fragment termed CLIP on each MHC class II molecule. MHC class II molecule interacts with HLA_DM, and HLA_DO in B-cells, in order to release CLIP and facilitate the binding of antigenic peptides.

It localises to the cell membrane. Its subcellular location is the endoplasmic reticulum membrane. It is found in the golgi apparatus. The protein localises to the trans-Golgi network membrane. The protein resides in the endosome membrane. It localises to the lysosome membrane. Its function is as follows. Binds peptides derived from antigens that access the endocytic route of antigen presenting cells (APC) and presents them on the cell surface for recognition by the CD4 T-cells. The peptide binding cleft accommodates peptides of 10-30 residues. The peptides presented by MHC class II molecules are generated mostly by degradation of proteins that access the endocytic route, where they are processed by lysosomal proteases and other hydrolases. Exogenous antigens that have been endocytosed by the APC are thus readily available for presentation via MHC II molecules, and for this reason this antigen presentation pathway is usually referred to as exogenous. As membrane proteins on their way to degradation in lysosomes as part of their normal turn-over are also contained in the endosomal/lysosomal compartments, exogenous antigens must compete with those derived from endogenous components. Autophagy is also a source of endogenous peptides, autophagosomes constitutively fuse with MHC class II loading compartments. In addition to APCs, other cells of the gastrointestinal tract, such as epithelial cells, express MHC class II molecules and CD74 and act as APCs, which is an unusual trait of the GI tract. To produce a MHC class II molecule that presents an antigen, three MHC class II molecules (heterodimers of an alpha and a beta chain) associate with a CD74 trimer in the ER to form a heterononamer. Soon after the entry of this complex into the endosomal/lysosomal system where antigen processing occurs, CD74 undergoes a sequential degradation by various proteases, including CTSS and CTSL, leaving a small fragment termed CLIP (class-II-associated invariant chain peptide). The removal of CLIP is facilitated by HLA-DM via direct binding to the alpha-beta-CLIP complex so that CLIP is released. HLA-DM stabilizes MHC class II molecules until primary high affinity antigenic peptides are bound. The MHC II molecule bound to a peptide is then transported to the cell membrane surface. In B-cells, the interaction between HLA-DM and MHC class II molecules is regulated by HLA-DO. Primary dendritic cells (DCs) also to express HLA-DO. Lysosomal microenvironment has been implicated in the regulation of antigen loading into MHC II molecules, increased acidification produces increased proteolysis and efficient peptide loading. The sequence is that of HLA class II histocompatibility antigen, DQ beta 1 chain (HLA-DQB1) from Homo sapiens (Human).